The chain runs to 174 residues: MATGPRYLVAFRRRREGRTDYYQRTKLVVADAPRMVVRRTNRHIIVQLVTAEMEGDKTLVSANSAELEKYGYTGATANTPAAYLTGLLFAAKAKKAGQDSAILDIGLNRATPGARVFAALKGAVDGGLEIPYGESILPSEDRLKGEHIAAYNEKAGDIVKNVEQVAAAIKKELV.

Belongs to the universal ribosomal protein uL18 family. Part of the 50S ribosomal subunit. Contacts the 5S and 23S rRNAs.

Its function is as follows. This is one of the proteins that bind and probably mediate the attachment of the 5S RNA into the large ribosomal subunit, where it forms part of the central protuberance. This Methanoregula boonei (strain DSM 21154 / JCM 14090 / 6A8) protein is Large ribosomal subunit protein uL18.